The sequence spans 397 residues: CCA-adding enzyme (397 aa).

Residues Gly26 and Arg29 each contribute to the ATP site. Residues Gly26 and Arg29 each coordinate CTP. 2 residues coordinate Mg(2+): Asp39 and Asp41. ATP contacts are provided by Arg110, Asp153, Arg156, Arg159, and Arg162. Residues Arg110, Asp153, Arg156, Arg159, and Arg162 each contribute to the CTP site.

Belongs to the tRNA nucleotidyltransferase/poly(A) polymerase family. Bacterial CCA-adding enzyme type 3 subfamily. As to quaternary structure, homodimer. Mg(2+) serves as cofactor.

The enzyme catalyses a tRNA precursor + 2 CTP + ATP = a tRNA with a 3' CCA end + 3 diphosphate. It catalyses the reaction a tRNA with a 3' CCA end + 2 CTP + ATP = a tRNA with a 3' CCACCA end + 3 diphosphate. Its function is as follows. Catalyzes the addition and repair of the essential 3'-terminal CCA sequence in tRNAs without using a nucleic acid template. Adds these three nucleotides in the order of C, C, and A to the tRNA nucleotide-73, using CTP and ATP as substrates and producing inorganic pyrophosphate. tRNA 3'-terminal CCA addition is required both for tRNA processing and repair. Also involved in tRNA surveillance by mediating tandem CCA addition to generate a CCACCA at the 3' terminus of unstable tRNAs. While stable tRNAs receive only 3'-terminal CCA, unstable tRNAs are marked with CCACCA and rapidly degraded. The polypeptide is CCA-adding enzyme (Bacillus thuringiensis subsp. konkukian (strain 97-27)).